The chain runs to 403 residues: Eukaryotic translation initiation factor 3 subunit H (403 aa).

The 150-residue stretch at Val-57–Phe-206 folds into the MPN domain. A disordered region spans residues Ala-99 to Thr-122.

The protein belongs to the eIF-3 subunit H family. Component of the eukaryotic translation initiation factor 3 (eIF-3) complex.

It localises to the cytoplasm. In terms of biological role, component of the eukaryotic translation initiation factor 3 (eIF-3) complex, which is involved in protein synthesis of a specialized repertoire of mRNAs and, together with other initiation factors, stimulates binding of mRNA and methionyl-tRNAi to the 40S ribosome. The eIF-3 complex specifically targets and initiates translation of a subset of mRNAs involved in cell proliferation. In Mycosarcoma maydis (Corn smut fungus), this protein is Eukaryotic translation initiation factor 3 subunit H.